The following is a 226-amino-acid chain: MKDLFLFSSLLDASHTFSYFFHIGLVALIAVIVAMMATRSMQLVPRGMQNLGEAFLEGVLSMGRDTMGSEKGARKYLPLVATLGIIVFFSNIIGIIPGFHAPTASLNLTLSLAIIVFVYYHFEGIRAQGFVKYFAHFMGPIKLLAPLMFPIEIVSHLSRVVSLSFRLFGNIKGDDLFLMVILALVPYIAPLPAYVLLTFMAFLQAFIFMILTYVYLAGATVVEEGH.

6 helical membrane passes run phenylalanine 17–alanine 37, leucine 79–phenylalanine 99, serine 105–isoleucine 125, phenylalanine 134–valine 154, leucine 176–leucine 196, and phenylalanine 199–alanine 219.

It belongs to the ATPase A chain family. In terms of assembly, F-type ATPases have 2 components, CF(1) - the catalytic core - and CF(0) - the membrane proton channel. CF(1) has five subunits: alpha(3), beta(3), gamma(1), delta(1), epsilon(1). CF(0) has three main subunits: a(1), b(2) and c(9-12). The alpha and beta chains form an alternating ring which encloses part of the gamma chain. CF(1) is attached to CF(0) by a central stalk formed by the gamma and epsilon chains, while a peripheral stalk is formed by the delta and b chains.

The protein localises to the cell inner membrane. In terms of biological role, key component of the proton channel; it plays a direct role in the translocation of protons across the membrane. This is ATP synthase subunit a from Campylobacter jejuni subsp. jejuni serotype O:6 (strain 81116 / NCTC 11828).